The sequence spans 238 residues: Covalently-linked cell wall protein 14 (238 aa).

A signal peptide spans 1 to 22 (MRATTLLSSVVSLALLSKEVLA). Residues 23–110 (TPPACLLACV…ASSSSKASSS (88 aa)) enclose the CFEM domain. 4 cysteine pairs are disulfide-bonded: C27–C67, C31–C62, C42–C50, and C52–C83. N87 is a glycosylation site (N-linked (GlcNAc...) asparagine). A disordered region spans residues 91-203 (GDSSSSASSS…TVSQETVSSA (113 aa)). Low complexity predominate over residues 93-203 (SSSSASSSAS…TVSQETVSSA (111 aa)). K161 is covalently cross-linked (Glycyl lysine isopeptide (Lys-Gly) (interchain with G-Cter in ubiquitin)). A lipid anchor (GPI-anchor amidated glycine) is attached at G217. A propeptide spans 218-238 (SGNVLEAGKSVFIAAVAAMLI) (removed in mature form).

The protein belongs to the CCW14 family. Extensively O-glycosylated. Post-translationally, the GPI-anchor is attached to the protein in the endoplasmic reticulum and serves to target the protein to the cell surface. There, the glucosamine-inositol phospholipid moiety is cleaved off and the GPI-modified mannoprotein is covalently attached via its lipidless GPI glycan remnant to the 1,6-beta-glucan of the outer cell wall layer.

The protein resides in the secreted. It localises to the cell wall. Its subcellular location is the membrane. Its function is as follows. Component of the inner layer of the cell wall. This Saccharomyces cerevisiae (strain ATCC 204508 / S288c) (Baker's yeast) protein is Covalently-linked cell wall protein 14 (CCW14).